We begin with the raw amino-acid sequence, 483 residues long: Glutamyl-tRNA(Gln) amidotransferase subunit A (483 aa).

Catalysis depends on charge relay system residues Lys75 and Ser150. The Acyl-ester intermediate role is filled by Ser174.

The protein belongs to the amidase family. GatA subfamily. As to quaternary structure, heterotrimer of A, B and C subunits.

The catalysed reaction is L-glutamyl-tRNA(Gln) + L-glutamine + ATP + H2O = L-glutaminyl-tRNA(Gln) + L-glutamate + ADP + phosphate + H(+). Its function is as follows. Allows the formation of correctly charged Gln-tRNA(Gln) through the transamidation of misacylated Glu-tRNA(Gln) in organisms which lack glutaminyl-tRNA synthetase. The reaction takes place in the presence of glutamine and ATP through an activated gamma-phospho-Glu-tRNA(Gln). The polypeptide is Glutamyl-tRNA(Gln) amidotransferase subunit A (Microcystis aeruginosa (strain NIES-843 / IAM M-2473)).